Reading from the N-terminus, the 297-residue chain is 4-diphosphocytidyl-2-C-methyl-D-erythritol kinase (297 aa).

K14 is a catalytic residue. 99–109 (PVAAGIGGGSA) contributes to the ATP binding site. Residue D141 is part of the active site.

It belongs to the GHMP kinase family. IspE subfamily.

It carries out the reaction 4-CDP-2-C-methyl-D-erythritol + ATP = 4-CDP-2-C-methyl-D-erythritol 2-phosphate + ADP + H(+). The protein operates within isoprenoid biosynthesis; isopentenyl diphosphate biosynthesis via DXP pathway; isopentenyl diphosphate from 1-deoxy-D-xylulose 5-phosphate: step 3/6. Its function is as follows. Catalyzes the phosphorylation of the position 2 hydroxy group of 4-diphosphocytidyl-2C-methyl-D-erythritol. In Bradyrhizobium diazoefficiens (strain JCM 10833 / BCRC 13528 / IAM 13628 / NBRC 14792 / USDA 110), this protein is 4-diphosphocytidyl-2-C-methyl-D-erythritol kinase.